Reading from the N-terminus, the 604-residue chain is uncharacterized protein (604 aa).

The signal sequence occupies residues 1 to 40 (MWLQQRIKVFPGLLSSSWARRVLAVSGFLVIIYWYIFSGS). At 41–563 (HYRSFWYSGK…EEHMAKQYRG (523 aa)) the chain is on the extracellular side. A glycan (N-linked (GlcNAc...) asparagine) is linked at Asn-337. A helical transmembrane segment spans residues 564–584 (LPFLFWFSVASLITLFHLFLF). Residues 585–604 (KLIYNEYCGPGAKPLFRSKV) are Cytoplasmic-facing.

The protein localises to the membrane. This is an uncharacterized protein from Xenopus laevis (African clawed frog).